A 137-amino-acid polypeptide reads, in one-letter code: L-ectoine synthase (137 aa).

Residues 115 to 137 (EVHDESGAYPADPELAREPVAAD) are disordered.

The protein belongs to the ectoine synthase family.

The enzyme catalyses (2S)-4-acetamido-2-aminobutanoate = L-ectoine + H2O. The protein operates within amine and polyamine biosynthesis; ectoine biosynthesis; L-ectoine from L-aspartate 4-semialdehyde: step 3/3. In terms of biological role, catalyzes the circularization of gamma-N-acetyl-alpha,gamma-diaminobutyric acid (ADABA) to ectoine (1,4,5,6-tetrahydro-2-methyl-4-pyrimidine carboxylic acid), which is an excellent osmoprotectant. This chain is L-ectoine synthase, found in Sphingopyxis alaskensis (strain DSM 13593 / LMG 18877 / RB2256) (Sphingomonas alaskensis).